We begin with the raw amino-acid sequence, 55 residues long: Large ribosomal subunit protein bL33 (55 aa).

The protein belongs to the bacterial ribosomal protein bL33 family.

This Caulobacter sp. (strain K31) protein is Large ribosomal subunit protein bL33.